The primary structure comprises 441 residues: Protein disulfide isomerase-like 2-3 (441 aa).

A signal peptide spans 1–18; it reads MRPAVAAALLLVAAAVAA. Thioredoxin domains are found at residues 19–139 and 159–276; these read SPVS…ALLR and SEKT…ANAA. Catalysis depends on nucleophile residues C59 and C62. The cysteines at positions 59 and 62 are disulfide-linked. Residues 143–166 form a disordered region; sequence NGKTSAGSGGKKSGGSSEKTEPSA. Catalysis depends on nucleophile residues C195 and C198. C195 and C198 are oxidised to a cystine.

This sequence belongs to the protein disulfide isomerase family.

It localises to the endoplasmic reticulum lumen. The enzyme catalyses Catalyzes the rearrangement of -S-S- bonds in proteins.. In terms of biological role, acts as a protein-folding catalyst that interacts with nascent polypeptides to catalyze the formation, isomerization, and reduction or oxidation of disulfide bonds. May play a role in storage protein biogenesis. This is Protein disulfide isomerase-like 2-3 (PDIL2-3) from Oryza sativa subsp. japonica (Rice).